A 691-amino-acid chain; its full sequence is Elongation factor G (691 aa).

In terms of domain architecture, tr-type G spans 6 to 281; that stretch reads SKYRNIGIMA…GVVDFLPSPI (276 aa). Residues 15-22, 79-83, and 133-136 contribute to the GTP site; these read AHIDAGKT, DTPGH, and NKMD.

Belongs to the TRAFAC class translation factor GTPase superfamily. Classic translation factor GTPase family. EF-G/EF-2 subfamily.

The protein resides in the cytoplasm. Its function is as follows. Catalyzes the GTP-dependent ribosomal translocation step during translation elongation. During this step, the ribosome changes from the pre-translocational (PRE) to the post-translocational (POST) state as the newly formed A-site-bound peptidyl-tRNA and P-site-bound deacylated tRNA move to the P and E sites, respectively. Catalyzes the coordinated movement of the two tRNA molecules, the mRNA and conformational changes in the ribosome. In Wolbachia pipientis wMel, this protein is Elongation factor G.